The following is a 357-amino-acid chain: P2Y purinoceptor 8 (357 aa).

The Extracellular portion of the chain corresponds to Met1 to Pro26. Asn4 carries an N-linked (GlcNAc...) asparagine glycan. A helical transmembrane segment spans residues Val27–Leu47. Topologically, residues Cys48–Pro56 are cytoplasmic. A helical transmembrane segment spans residues Ser57 to Phe77. Topologically, residues Gln78–Leu97 are extracellular. Cys95 and Cys174 are oxidised to a cystine. Residues Val98 to Ile118 traverse the membrane as a helical segment. Residues Glu119–Arg137 lie on the Cytoplasmic side of the membrane. Residues Tyr138–Glu158 traverse the membrane as a helical segment. Residues Ser159–Asn185 lie on the Extracellular side of the membrane. The chain crosses the membrane as a helical span at residues Phe186–Ile206. Residues Val207 to Tyr236 are Cytoplasmic-facing. The helical transmembrane segment at Leu237 to Leu257 threads the bilayer. Residues Ala258–Tyr271 are Extracellular-facing. The helical transmembrane segment at Pro272–Phe294 threads the bilayer. Residues Ala295 to Phe357 are Cytoplasmic-facing.

The protein belongs to the G-protein coupled receptor 1 family.

It localises to the cell membrane. Its function is as follows. Probable receptor for purines coupled to G-proteins. In Gallus gallus (Chicken), this protein is P2Y purinoceptor 8 (P2RY8).